The sequence spans 105 residues: V-type ATP synthase subunit F (105 aa).

It belongs to the V-ATPase F subunit family.

Produces ATP from ADP in the presence of a proton gradient across the membrane. The chain is V-type ATP synthase subunit F from Clostridium perfringens (strain 13 / Type A).